The chain runs to 279 residues: MSDEEVEHVEEQYEEEEEAQEEAPSPAEVHEPAPEVHVPEEVHEDALEDMREEEEEEEKPRPKLTAPKIPEGEKVDFDDIQKKRQNKDLMELQALIDSHFEARKKEEEELVALKERIEKRRAERAEQQRIRAEKERERQNRLAEEKARREEEDAKRRAEEDLKKKKALSSMGANYSSYLAKADQKRGKKQTAREMKKKILAERRKPLNIDHLSDEKLRDKAKELWDTLYQLETDKFEFGEKLKRQKYDIMNVRARVEMLAKFSKKAGTTAKGKVGGRWK.

Positions 1–21 (MSDEEVEHVEEQYEEEEEAQE) are enriched in acidic residues. A disordered region spans residues 1-82 (MSDEEVEHVE…EKVDFDDIQK (82 aa)). S2 bears the N-acetylserine mark. The residue at position 2 (S2) is a Phosphoserine. Composition is skewed to basic and acidic residues over residues 28–49 (EVHE…ALED) and 70–82 (PEGE…DIQK). The residue at position 98 (S98) is a Phosphoserine. Residues 121 to 163 (RAERAEQQRIRAEKERERQNRLAEEKARREEEDAKRRAEEDLK) are compositionally biased toward basic and acidic residues. The interval 121–200 (RAERAEQQRI…TAREMKKKIL (80 aa)) is disordered. Phosphoserine occurs at positions 169, 176, and 177. Basic and acidic residues predominate over residues 191 to 200 (TAREMKKKIL). S213 is subject to Phosphoserine. The residue at position 229 (Y229) is a Phosphotyrosine.

The protein belongs to the troponin T family.

In terms of biological role, troponin T is the tropomyosin-binding subunit of troponin, the thin filament regulatory complex which confers calcium-sensitivity to striated muscle actomyosin ATPase activity. The chain is Troponin T, fast skeletal muscle (TNNT3) from Oryctolagus cuniculus (Rabbit).